The chain runs to 701 residues: Protein UL29/UL28 (701 aa).

Residues 1–33 (MSGRRKGCSAATASSSSSSPPSRLPPLPGHARR) form a disordered region.

It belongs to the herpesviridae US22 family. As to quaternary structure, interacts with UL38 and host HDAC1; these interactions are necessary for the HDAC1 interaction with UL38. Interacts with host MTA2.

The protein resides in the virion. Its subcellular location is the host nucleus. It localises to the host cytoplasm. Its function is as follows. Contributes to activation of immediate-early gene expression. The sequence is that of Protein UL29/UL28 (UL29) from Homo sapiens (Human).